A 197-amino-acid chain; its full sequence is MMNRSAEVQRDTLETRVKVRLDLDGTGESRIRIGVPFMEHMLDQVARHGLIDLDIEADGDTHIDDHHTVEDVGITLGQALAQALGDKKGIRRYGHAYVPLDEALSRVVVDFSGRPGLQFHVDFVRARIGQFDVDLFQEFFQGLVNHAALTLHVDNLRGINAHHQAETVFKALGRALRMAAEADPRQADRIPSTKGAL.

It belongs to the imidazoleglycerol-phosphate dehydratase family.

Its subcellular location is the cytoplasm. The catalysed reaction is D-erythro-1-(imidazol-4-yl)glycerol 3-phosphate = 3-(imidazol-4-yl)-2-oxopropyl phosphate + H2O. Its pathway is amino-acid biosynthesis; L-histidine biosynthesis; L-histidine from 5-phospho-alpha-D-ribose 1-diphosphate: step 6/9. This chain is Imidazoleglycerol-phosphate dehydratase, found in Alkalilimnicola ehrlichii (strain ATCC BAA-1101 / DSM 17681 / MLHE-1).